Consider the following 64-residue polypeptide: Large ribosomal subunit protein bL35 (64 aa).

Composition is skewed to basic residues over residues methionine 1–arginine 15 and valine 23–arginine 42. Residues methionine 1–aspartate 45 are disordered.

Belongs to the bacterial ribosomal protein bL35 family.

This is Large ribosomal subunit protein bL35 from Mycolicibacterium vanbaalenii (strain DSM 7251 / JCM 13017 / BCRC 16820 / KCTC 9966 / NRRL B-24157 / PYR-1) (Mycobacterium vanbaalenii).